A 559-amino-acid polypeptide reads, in one-letter code: MFPLIILISFSLASLSETATGAVTNLSACLINHNVHNFSIYPTSRNYFNLLHFSLQNLRFAAPFMPKPTFIILPSSKEELVSTIFCCRKASYEIRVRCGGHSYEGTSYVSFDASPFVIVDLMKLDDVSVDLDSETAWAQGGATIGQIYYAIAKVSDVHAFSAGSGPTVGSGGHISGGGFGLLSRKFGLAADNVVDALLIDADGRLLDRKAMGEDVFWAIRGGGGGNWGIVYAWKIRLLKVPKIVTTCMIYRPGSKQYVAQILEKWQIVTPNLVDDFTLGVLLRPADLPADMKYGNTTPIEIFPQFNALYLGPKTEVLSISNETFPELGVKNDECKEMTWVESALFFSELADVNGNSTGDISRLKERYMDGKGFFKGKTDYVKKPVSMDGMLTFLVELEKNPKGYLVFDPYGGAMDKISDQAIAFPHRKGNLFAIQYLAQWNEEDDYMSDVYMEWIRGFYNTMTPFVSSSPRGAYINYLDMDLGVNMVDDYLLRNASSSSPSSSVDAVERARAWGEMYFLHNYDRLVKAKTQIDPLNVFRHEQSIPPMLGSTQEHKYSSE.

The N-terminal stretch at 1–21 (MFPLIILISFSLASLSETATG) is a signal peptide. N-linked (GlcNAc...) asparagine glycosylation is found at asparagine 25 and asparagine 37. Cysteine 29 and cysteine 86 are joined by a disulfide. Residues 64-240 (FMPKPTFIIL…YAWKIRLLKV (177 aa)) form the FAD-binding PCMH-type domain. Position 101 is a pros-8alpha-FAD histidine (histidine 101). 3 N-linked (GlcNAc...) asparagine glycosylation sites follow: asparagine 321, asparagine 355, and asparagine 494.

Belongs to the oxygen-dependent FAD-linked oxidoreductase family. It depends on FAD as a cofactor. As to expression, mostly expressed in roots.

Its subcellular location is the vacuole. It participates in alkaloid biosynthesis; nicotine biosynthesis. Its function is as follows. Involved in the biosynthesis of pyridine alkaloid natural products, leading mainly to the production of anabasine, anatabine, nicotine and nornicotine, effective deterrents against herbivores with antiparasitic and pesticide properties (neurotoxins); nornicotine serves as the precursor in the synthesis of the carcinogen compound N'-nitrosonornicotine (NNN). Catalyzes a late oxidation step subsequent to the pyridine ring condensation reaction in the biosynthesis of alkaloids. The chain is Berberine bridge enzyme-like A from Nicotiana tabacum (Common tobacco).